The primary structure comprises 181 residues: Cytochrome b6-f complex iron-sulfur subunit (181 aa).

Residues 1-35 are disordered; that stretch reads MAQTGNFKSPARMSSLGQGAAPASSGAVTGGKPRE. The next 2 helical transmembrane spans lie at 53 to 73 and 114 to 134; these read VGGV…KYII and GGAL…VNWV. A Rieske domain is found at 85–178; it reads LTVGKASEVP…ARIEGDSIII (94 aa). [2Fe-2S] cluster-binding residues include C124, H126, C142, and H145. A disulfide bridge connects residues C129 and C144.

Belongs to the Rieske iron-sulfur protein family. Requires [2Fe-2S] cluster as cofactor.

The protein resides in the cell inner membrane. The enzyme catalyses 2 oxidized [plastocyanin] + a plastoquinol + 2 H(+)(in) = 2 reduced [plastocyanin] + a plastoquinone + 4 H(+)(out). Functionally, component of the green S-bacteria bc-complex which consists of the Rieske protein and cytochrome b subunit and which appears to lack a cytochrome c1-equivalent. This complex has a comparatively low redox potential. In Chlorobaculum thiosulfatiphilum (Chlorobium limicola f.sp. thiosulfatophilum), this protein is Cytochrome b6-f complex iron-sulfur subunit (petC).